Reading from the N-terminus, the 78-residue chain is Large ribosomal subunit protein bL28 (78 aa).

The segment at 1 to 28 (MSAYCQVTGRKPGFGKQVSHSHRHTSRR) is disordered.

It belongs to the bacterial ribosomal protein bL28 family.

This Corynebacterium urealyticum (strain ATCC 43042 / DSM 7109) protein is Large ribosomal subunit protein bL28.